Here is a 427-residue protein sequence, read N- to C-terminus: D-inositol 3-phosphate glycosyltransferase (427 aa).

Position 12 (His12) interacts with 1D-myo-inositol 3-phosphate. Residues Gln18 to Pro19 and Gly26 contribute to the UDP-N-acetyl-alpha-D-glucosamine site. Residues Asp23–Asn28, Lys81, Tyr113, Thr137, and Arg157 each bind 1D-myo-inositol 3-phosphate. Arg234, Lys239, and Arg297 together coordinate UDP-N-acetyl-alpha-D-glucosamine. Residues Tyr306, Gln307, and Ala309 each coordinate Mg(2+). UDP-N-acetyl-alpha-D-glucosamine contacts are provided by Glu319 and Glu327. Thr333 lines the Mg(2+) pocket.

The protein belongs to the glycosyltransferase group 1 family. MshA subfamily. Homodimer.

It carries out the reaction 1D-myo-inositol 3-phosphate + UDP-N-acetyl-alpha-D-glucosamine = 1D-myo-inositol 2-acetamido-2-deoxy-alpha-D-glucopyranoside 3-phosphate + UDP + H(+). Its function is as follows. Catalyzes the transfer of a N-acetyl-glucosamine moiety to 1D-myo-inositol 3-phosphate to produce 1D-myo-inositol 2-acetamido-2-deoxy-glucopyranoside 3-phosphate in the mycothiol biosynthesis pathway. The chain is D-inositol 3-phosphate glycosyltransferase from Corynebacterium diphtheriae (strain ATCC 700971 / NCTC 13129 / Biotype gravis).